The chain runs to 205 residues: Glycerol-3-phosphate acyltransferase (205 aa).

The next 4 helical transmembrane spans lie at 4–24 (IAPG…AILV), 80–100 (PFWL…PIFF), 112–132 (FGAI…TWLL), and 138–158 (GYSS…VWWF).

Belongs to the PlsY family. Probably interacts with PlsX.

It is found in the cell inner membrane. The catalysed reaction is an acyl phosphate + sn-glycerol 3-phosphate = a 1-acyl-sn-glycero-3-phosphate + phosphate. The protein operates within lipid metabolism; phospholipid metabolism. In terms of biological role, catalyzes the transfer of an acyl group from acyl-phosphate (acyl-PO(4)) to glycerol-3-phosphate (G3P) to form lysophosphatidic acid (LPA). This enzyme utilizes acyl-phosphate as fatty acyl donor, but not acyl-CoA or acyl-ACP. In Cronobacter sakazakii (strain ATCC BAA-894) (Enterobacter sakazakii), this protein is Glycerol-3-phosphate acyltransferase.